Consider the following 432-residue polypeptide: Adenylosuccinate synthetase (432 aa).

GTP is bound by residues 12 to 18 (GDEGKGK) and 40 to 42 (GHT). The Proton acceptor role is filled by aspartate 13. Positions 13 and 40 each coordinate Mg(2+). Residues 13–16 (DEGK), 38–41 (NAGH), threonine 126, arginine 140, glutamine 219, threonine 234, and arginine 300 each bind IMP. Histidine 41 functions as the Proton donor in the catalytic mechanism. 296–302 (STTGRPR) serves as a coordination point for substrate. GTP-binding positions include arginine 302, 328–330 (KLD), and 410–412 (STG).

The protein belongs to the adenylosuccinate synthetase family. As to quaternary structure, homodimer. Mg(2+) is required as a cofactor.

Its subcellular location is the cytoplasm. It carries out the reaction IMP + L-aspartate + GTP = N(6)-(1,2-dicarboxyethyl)-AMP + GDP + phosphate + 2 H(+). Its pathway is purine metabolism; AMP biosynthesis via de novo pathway; AMP from IMP: step 1/2. Plays an important role in the de novo pathway of purine nucleotide biosynthesis. Catalyzes the first committed step in the biosynthesis of AMP from IMP. This is Adenylosuccinate synthetase from Aquifex aeolicus (strain VF5).